A 180-amino-acid chain; its full sequence is UPF0149 protein XAC3406 (180 aa).

It belongs to the UPF0149 family.

The chain is UPF0149 protein XAC3406 from Xanthomonas axonopodis pv. citri (strain 306).